The chain runs to 35 residues: Photosystem I reaction center subunit Z (35 aa).

Residues 10-30 (LVIITTLVVPFMAAAALLFII) traverse the membrane as a helical segment.

The G.violaceus PSI reaction center is composed of one copy each of PsaA,B,C,D,E,F,L,M and Z, and forms trimeric complexes.

It localises to the cell inner membrane. The chain is Photosystem I reaction center subunit Z (psaZ) from Gloeobacter violaceus (strain ATCC 29082 / PCC 7421).